The following is a 545-amino-acid chain: CTP synthase (545 aa).

The interval M1 to L266 is amidoligase domain. Residue S14 coordinates CTP. Residue S14 participates in UTP binding. ATP-binding positions include S15–I20 and D72. Mg(2+)-binding residues include D72 and E140. Residues D147–E149, K187–Q192, and K223 contribute to the CTP site. Residues K187–Q192 and K223 each bind UTP. K239 to V241 provides a ligand contact to ATP. The region spanning V291–R542 is the Glutamine amidotransferase type-1 domain. G352 contributes to the L-glutamine binding site. The active-site Nucleophile; for glutamine hydrolysis is the C379. Residues L380 to Q383, E403, and R470 each bind L-glutamine. Catalysis depends on residues H515 and E517.

Belongs to the CTP synthase family. In terms of assembly, homotetramer.

The catalysed reaction is UTP + L-glutamine + ATP + H2O = CTP + L-glutamate + ADP + phosphate + 2 H(+). It catalyses the reaction L-glutamine + H2O = L-glutamate + NH4(+). The enzyme catalyses UTP + NH4(+) + ATP = CTP + ADP + phosphate + 2 H(+). It functions in the pathway pyrimidine metabolism; CTP biosynthesis via de novo pathway; CTP from UDP: step 2/2. Its activity is regulated as follows. Allosterically activated by GTP, when glutamine is the substrate; GTP has no effect on the reaction when ammonia is the substrate. The allosteric effector GTP functions by stabilizing the protein conformation that binds the tetrahedral intermediate(s) formed during glutamine hydrolysis. Inhibited by the product CTP, via allosteric rather than competitive inhibition. In terms of biological role, catalyzes the ATP-dependent amination of UTP to CTP with either L-glutamine or ammonia as the source of nitrogen. Regulates intracellular CTP levels through interactions with the four ribonucleotide triphosphates. This is CTP synthase from Shewanella baltica (strain OS155 / ATCC BAA-1091).